The following is a 334-amino-acid chain: Holliday junction branch migration complex subunit RuvB (334 aa).

The tract at residues 4 to 184 is large ATPase domain (RuvB-L); the sequence is ADRLIQPQLQ…FGIPLRLEFY (181 aa). ATP is bound by residues R24, G65, K68, T69, T70, 131 to 133, R174, Y184, and R221; that span reads EDY. T69 provides a ligand contact to Mg(2+). A small ATPAse domain (RuvB-S) region spans residues 185–255; it reads NVKDLSTIVT…VAEQALDLLD (71 aa). The segment at 258 to 334 is head domain (RuvB-H); the sequence is GEGFDYMDRK…YLHFGMIKPE (77 aa). Positions 294, 313, and 318 each coordinate DNA.

It belongs to the RuvB family. Homohexamer. Forms an RuvA(8)-RuvB(12)-Holliday junction (HJ) complex. HJ DNA is sandwiched between 2 RuvA tetramers; dsDNA enters through RuvA and exits via RuvB. An RuvB hexamer assembles on each DNA strand where it exits the tetramer. Each RuvB hexamer is contacted by two RuvA subunits (via domain III) on 2 adjacent RuvB subunits; this complex drives branch migration. In the full resolvosome a probable DNA-RuvA(4)-RuvB(12)-RuvC(2) complex forms which resolves the HJ.

The protein localises to the cytoplasm. It carries out the reaction ATP + H2O = ADP + phosphate + H(+). In terms of biological role, the RuvA-RuvB-RuvC complex processes Holliday junction (HJ) DNA during genetic recombination and DNA repair, while the RuvA-RuvB complex plays an important role in the rescue of blocked DNA replication forks via replication fork reversal (RFR). RuvA specifically binds to HJ cruciform DNA, conferring on it an open structure. The RuvB hexamer acts as an ATP-dependent pump, pulling dsDNA into and through the RuvAB complex. RuvB forms 2 homohexamers on either side of HJ DNA bound by 1 or 2 RuvA tetramers; 4 subunits per hexamer contact DNA at a time. Coordinated motions by a converter formed by DNA-disengaged RuvB subunits stimulates ATP hydrolysis and nucleotide exchange. Immobilization of the converter enables RuvB to convert the ATP-contained energy into a lever motion, pulling 2 nucleotides of DNA out of the RuvA tetramer per ATP hydrolyzed, thus driving DNA branch migration. The RuvB motors rotate together with the DNA substrate, which together with the progressing nucleotide cycle form the mechanistic basis for DNA recombination by continuous HJ branch migration. Branch migration allows RuvC to scan DNA until it finds its consensus sequence, where it cleaves and resolves cruciform DNA. In Shewanella sp. (strain ANA-3), this protein is Holliday junction branch migration complex subunit RuvB.